A 185-amino-acid chain; its full sequence is Ribosome-recycling factor (185 aa).

It belongs to the RRF family.

Its subcellular location is the cytoplasm. In terms of biological role, responsible for the release of ribosomes from messenger RNA at the termination of protein biosynthesis. May increase the efficiency of translation by recycling ribosomes from one round of translation to another. The sequence is that of Ribosome-recycling factor from Pseudomonas putida (strain W619).